A 477-amino-acid chain; its full sequence is Protein AC142 (477 aa).

It localises to the host cytoplasm. It is found in the host nucleus. Its subcellular location is the virion. In terms of biological role, required for occlusion-derived virus (ODV) envelopment and subsequent embedding of virions into polyhedra. This chain is Protein AC142 (ORF142), found in Autographa californica nuclear polyhedrosis virus (AcMNPV).